The following is a 280-amino-acid chain: Elongation factor 1-delta (280 aa).

An N-acetylalanine modification is found at Ala-2. Lys-17 is subject to N6-acetyllysine. A phosphoserine mark is found at Ser-37, Ser-44, Ser-60, Ser-86, and Ser-106. Lys-107 bears the N6-acetyllysine mark. The segment at 113 to 171 (SALEKSSPAHRATTPQTQHVSPMRQVEPPSRKAATATEDDEDDDIDLFGSDEEEDKEAT) is disordered. At Lys-117 the chain carries N6-acetyllysine; alternate. Lys-117 carries the post-translational modification N6-succinyllysine; alternate. The residue at position 119 (Ser-119) is a Phosphoserine. Thr-129 carries the post-translational modification Phosphothreonine. Ser-133 carries the post-translational modification Phosphoserine. Position 147 is a phosphothreonine (Thr-147). A compositionally biased stretch (acidic residues) spans 149–168 (TEDDEDDDIDLFGSDEEEDK). At Ser-162 the chain carries Phosphoserine; by CK2.

Belongs to the EF-1-beta/EF-1-delta family. EF-1 is composed of 4 subunits: alpha, beta, delta, and gamma.

EF-1-beta and EF-1-delta stimulate the exchange of GDP bound to EF-1-alpha to GTP. In Bos taurus (Bovine), this protein is Elongation factor 1-delta (EEF1D).